A 118-amino-acid polypeptide reads, in one-letter code: Large ribosomal subunit protein uL18 (118 aa).

Belongs to the universal ribosomal protein uL18 family. As to quaternary structure, part of the 50S ribosomal subunit; part of the 5S rRNA/L5/L18/L25 subcomplex. Contacts the 5S and 23S rRNAs.

This is one of the proteins that bind and probably mediate the attachment of the 5S RNA into the large ribosomal subunit, where it forms part of the central protuberance. The polypeptide is Large ribosomal subunit protein uL18 (Rickettsia prowazekii (strain Madrid E)).